A 196-amino-acid chain; its full sequence is Small nuclear ribonucleoprotein-associated protein B (196 aa).

One can recognise a Sm domain in the interval 7–101; the sequence is AHSSRLANLI…ILSTVVEDKP (95 aa). The Nuclear localization signal motif lies at 105–132; it reads KKERLVRDKKEKKQAQKQTKLRKEKEKK. The segment covering 108-118 has biased composition (basic and acidic residues); that stretch reads RLVRDKKEKKQ. Residues 108-196 form a disordered region; sequence RLVRDKKEKK…FQPPPGFKRK (89 aa). Polar residues predominate over residues 140-181; the sequence is NTANAKHTSSNSREIAQPSSSRYNGGNDNIGANRSRFNNEAP.

This sequence belongs to the snRNP SmB/SmN family. Component of the Sm core complex, present in spliceosomal snRNP U1, U2, U4/U6 and U5. The core complex contains SMB1, SMD1, SMD2, SMD3, SME1, SMX3 and SMX2 (Sm proteins B, D1, D2, D3, E, F and G, respectively), and is probably a heptameric ring structure. SMB1 specifically interacts with SMD3. Belongs to the CWC complex (or CEF1-associated complex), a spliceosome sub-complex reminiscent of a late-stage spliceosome composed of the U2, U5 and U6 snRNAs and at least BUD13, BUD31, BRR2, CDC40, CEF1, CLF1, CUS1, CWC2, CWC15, CWC21, CWC22, CWC23, CWC24, CWC25, CWC27, ECM2, HSH155, IST3, ISY1, LEA1, MSL1, NTC20, PRP8, PRP9, PRP11, PRP19, PRP21, PRP22, PRP45, PRP46, SLU7, SMB1, SMD1, SMD2, SMD3, SMX2, SMX3, SNT309, SNU114, SPP2, SYF1, SYF2, RSE1 and YJU2. Component of the U4/U6-U5 tri-snRNP complex composed of the U4, U6 and U5 snRNAs and at least PRP3, PRP4, PRP6, PRP8, PRP18, PRP38, SNU13, SNU23, SNU66, SNU114, SPP381, SMB1, SMD1, SMD2, SMD3, SMX2, SMX3, LSM2, LSM3, LSM4, LSM5, LSM6, LSM7, LSM8, BRR2 and DIB1. Interacts with the trimethylguanosine synthase TGS1.

It is found in the nucleus. It localises to the cytoplasm. Functionally, plays a role in pre-mRNA splicing as a core component of the spliceosomal U1, U2, U4 and U5 small nuclear ribonucleoproteins (snRNPs), the building blocks of the spliceosome. This is Small nuclear ribonucleoprotein-associated protein B (SMB1) from Saccharomyces cerevisiae (strain ATCC 204508 / S288c) (Baker's yeast).